The chain runs to 406 residues: Histidine--tRNA ligase (406 aa).

Belongs to the class-II aminoacyl-tRNA synthetase family. In terms of assembly, homodimer.

It localises to the cytoplasm. It catalyses the reaction tRNA(His) + L-histidine + ATP = L-histidyl-tRNA(His) + AMP + diphosphate + H(+). This chain is Histidine--tRNA ligase, found in Nitratiruptor sp. (strain SB155-2).